Here is a 434-residue protein sequence, read N- to C-terminus: Eukaryotic translation initiation factor 3 subunit E-1 (434 aa).

Residues 219–392 (FFNHPKGRDL…GHVVMGTQPL (174 aa)) form the PCI domain.

This sequence belongs to the eIF-3 subunit E family. Component of the eukaryotic translation initiation factor 3 (eIF-3) complex. The eIF-3 complex interacts with pix. Interacts with mxt.

It is found in the cytoplasm. Its function is as follows. Component of the eukaryotic translation initiation factor 3 (eIF-3) complex, which is involved in protein synthesis of a specialized repertoire of mRNAs and, together with other initiation factors, stimulates binding of mRNA and methionyl-tRNAi to the 40S ribosome. The eIF-3 complex specifically targets and initiates translation of a subset of mRNAs involved in cell proliferation. In Drosophila willistoni (Fruit fly), this protein is Eukaryotic translation initiation factor 3 subunit E-1 (eIF3-S6-1).